The following is a 105-amino-acid chain: uncharacterized protein (105 aa).

The next 2 membrane-spanning stretches (helical) occupy residues Asn-26–Ile-46 and Ser-66–Ile-86.

Its subcellular location is the cell membrane. This is an uncharacterized protein from Mycoplasma pneumoniae (strain ATCC 29342 / M129 / Subtype 1) (Mycoplasmoides pneumoniae).